Here is a 382-residue protein sequence, read N- to C-terminus: Proton extrusion protein PxcA (382 aa).

4 consecutive transmembrane segments (helical) span residues 156–176, 257–277, 305–325, and 340–360; these read TLIS…VQQV, AVKN…VCVF, IILF…TVLL, and FILL…KYWI.

It belongs to the CemA family.

Its subcellular location is the cell inner membrane. Required for H(+) efflux immediately after light irradiation to form a rapid H(+) concentration gradient across the thylakoid membranes. Together with PxcL, contributes to transient H(+) uptake following dark to light transition. The polypeptide is Proton extrusion protein PxcA (Synechococcus sp. (strain WH7803)).